Reading from the N-terminus, the 648-residue chain is MTINHLILQNLKKNLKNYYLYVFALMFSVALYFAFVTLQYDPAMDDVQEGIKGAAAMKTASVLLVVIVTTFLLYANNIFIKRRSKEIGLFQMIGMTKGKVFRILSAENLILYFGSLAGGVFIGFAISKVVTMILFKLTGLDRIATLSFSVPALVQTVIVFTLIYGLILLANYLFVKQQTILSLFHVTSSSEDRVKKVSLFDIIIGSLGIVSILVGYFVSSKLFGGTFTSMETLFIAMIFILGSVIIGTYFFYKGSVTFLFNLIRKKKNGHLAVRDVLSLSSIMFRMKSNALILTIITTISGLAIGLLSLSYISYYSAEKTAEHYVPSDFTLTDMEDAAYFKEALDAHGIAYDETVIDVLIAEVYVKDILEEPLDGVNFDSDIMILPVIRDTAVESVNVAPEEAAFTGYNDMMQQFMSLKDSGSIELRGKQKVIPQNYIGLHSEYLVSTYFSSGGLPLAIVNETTFSQLQDDINPEIQLDSSVHIGIDIKDARQLQEAVVLFHETPFTSETPQYAQVEMSQSQKQTFGLAMFIVGFLGLTFLITSGCILYFKQMDESEEEKGSYTILRKLGFTQGDLLKGIRVKQVFNFGIPLLLGLSHSYFAVKSGWFFFGNELWTPMIMVMLLYTALYSIFAILSVLYYKKVIKDAL.

A run of 10 helical transmembrane segments spans residues Y18–L38, A60–I80, I110–V130, V150–A170, L199–S219, T232–Y252, A290–S310, L528–L548, I590–F610, and M618–L638.

The protein belongs to the ABC-4 integral membrane protein family. In terms of assembly, the complex is composed of two ATP-binding proteins (BceA) and two transmembrane proteins (BceB).

The protein localises to the cell membrane. Part of the ABC transporter complex BceAB (TC 3.A.1.123.5) involved in bacitracin export. This chain is Bacitracin export permease protein BceB (bceB), found in Halalkalibacterium halodurans (strain ATCC BAA-125 / DSM 18197 / FERM 7344 / JCM 9153 / C-125) (Bacillus halodurans).